Consider the following 336-residue polypeptide: Holliday junction branch migration complex subunit RuvB (336 aa).

A large ATPase domain (RuvB-L) region spans residues 4–184; it reads SDRLISSQSI…FGIVQRLEYY (181 aa). Residues Ile23, Arg24, Gly65, Lys68, Thr69, Thr70, 131–133, Arg174, Tyr184, and Arg221 contribute to the ATP site; that span reads EDY. Thr69 contacts Mg(2+). Positions 185 to 255 are small ATPAse domain (RuvB-S); the sequence is SVDSLTQIVA…MAQQALEMLE (71 aa). A head domain (RuvB-H) region spans residues 258–336; the sequence is QHGFDLMDRK…HFGFSAIEQE (79 aa). Arg313 and Arg318 together coordinate DNA.

The protein belongs to the RuvB family. As to quaternary structure, homohexamer. Forms an RuvA(8)-RuvB(12)-Holliday junction (HJ) complex. HJ DNA is sandwiched between 2 RuvA tetramers; dsDNA enters through RuvA and exits via RuvB. An RuvB hexamer assembles on each DNA strand where it exits the tetramer. Each RuvB hexamer is contacted by two RuvA subunits (via domain III) on 2 adjacent RuvB subunits; this complex drives branch migration. In the full resolvosome a probable DNA-RuvA(4)-RuvB(12)-RuvC(2) complex forms which resolves the HJ.

It localises to the cytoplasm. It catalyses the reaction ATP + H2O = ADP + phosphate + H(+). Its function is as follows. The RuvA-RuvB-RuvC complex processes Holliday junction (HJ) DNA during genetic recombination and DNA repair, while the RuvA-RuvB complex plays an important role in the rescue of blocked DNA replication forks via replication fork reversal (RFR). RuvA specifically binds to HJ cruciform DNA, conferring on it an open structure. The RuvB hexamer acts as an ATP-dependent pump, pulling dsDNA into and through the RuvAB complex. RuvB forms 2 homohexamers on either side of HJ DNA bound by 1 or 2 RuvA tetramers; 4 subunits per hexamer contact DNA at a time. Coordinated motions by a converter formed by DNA-disengaged RuvB subunits stimulates ATP hydrolysis and nucleotide exchange. Immobilization of the converter enables RuvB to convert the ATP-contained energy into a lever motion, pulling 2 nucleotides of DNA out of the RuvA tetramer per ATP hydrolyzed, thus driving DNA branch migration. The RuvB motors rotate together with the DNA substrate, which together with the progressing nucleotide cycle form the mechanistic basis for DNA recombination by continuous HJ branch migration. Branch migration allows RuvC to scan DNA until it finds its consensus sequence, where it cleaves and resolves cruciform DNA. In Legionella pneumophila subsp. pneumophila (strain Philadelphia 1 / ATCC 33152 / DSM 7513), this protein is Holliday junction branch migration complex subunit RuvB.